Reading from the N-terminus, the 202-residue chain is UPF0102 protein Dde_1093 (202 aa).

This sequence belongs to the UPF0102 family.

The polypeptide is UPF0102 protein Dde_1093 (Oleidesulfovibrio alaskensis (strain ATCC BAA-1058 / DSM 17464 / G20) (Desulfovibrio alaskensis)).